The following is a 426-amino-acid chain: Serine--tRNA ligase (426 aa).

231 to 233 (TSE) contributes to the L-serine binding site. Position 262–264 (262–264 (RSE)) interacts with ATP. Residue Glu-285 coordinates L-serine. 349–352 (EISS) provides a ligand contact to ATP. Ser-385 contributes to the L-serine binding site.

The protein belongs to the class-II aminoacyl-tRNA synthetase family. Type-1 seryl-tRNA synthetase subfamily. In terms of assembly, homodimer. The tRNA molecule binds across the dimer.

It is found in the cytoplasm. The enzyme catalyses tRNA(Ser) + L-serine + ATP = L-seryl-tRNA(Ser) + AMP + diphosphate + H(+). The catalysed reaction is tRNA(Sec) + L-serine + ATP = L-seryl-tRNA(Sec) + AMP + diphosphate + H(+). It participates in aminoacyl-tRNA biosynthesis; selenocysteinyl-tRNA(Sec) biosynthesis; L-seryl-tRNA(Sec) from L-serine and tRNA(Sec): step 1/1. Functionally, catalyzes the attachment of serine to tRNA(Ser). Is also able to aminoacylate tRNA(Sec) with serine, to form the misacylated tRNA L-seryl-tRNA(Sec), which will be further converted into selenocysteinyl-tRNA(Sec). The chain is Serine--tRNA ligase from Legionella pneumophila (strain Corby).